The following is a 662-amino-acid chain: UvrABC system protein B (662 aa).

One can recognise a Helicase ATP-binding domain in the interval Thr25–Pro414. Residue Gly38–Thr45 coordinates ATP. A Beta-hairpin motif is present at residues Tyr91–Ile114. A Helicase C-terminal domain is found at Gln430–Ile592. The UVR domain maps to Lys622–Ala657.

This sequence belongs to the UvrB family. Forms a heterotetramer with UvrA during the search for lesions. Interacts with UvrC in an incision complex.

Its subcellular location is the cytoplasm. Functionally, the UvrABC repair system catalyzes the recognition and processing of DNA lesions. A damage recognition complex composed of 2 UvrA and 2 UvrB subunits scans DNA for abnormalities. Upon binding of the UvrA(2)B(2) complex to a putative damaged site, the DNA wraps around one UvrB monomer. DNA wrap is dependent on ATP binding by UvrB and probably causes local melting of the DNA helix, facilitating insertion of UvrB beta-hairpin between the DNA strands. Then UvrB probes one DNA strand for the presence of a lesion. If a lesion is found the UvrA subunits dissociate and the UvrB-DNA preincision complex is formed. This complex is subsequently bound by UvrC and the second UvrB is released. If no lesion is found, the DNA wraps around the other UvrB subunit that will check the other stand for damage. The protein is UvrABC system protein B of Rickettsia prowazekii (strain Madrid E).